A 279-amino-acid chain; its full sequence is Single-strand selective monofunctional uracil DNA glycosylase (279 aa).

The substrate site is built by methionine 86, phenylalanine 100, and asparagine 165. Residues 175–189 are DNA-binding; it reads SGRNLTPAELPAKQR. Position 241 (histidine 241) interacts with substrate.

Belongs to the uracil-DNA glycosylase (UDG) superfamily. SMUG1 family.

The protein resides in the nucleus. Its function is as follows. Recognizes base lesions in the genome and initiates base excision DNA repair. Acts as a monofunctional DNA glycosylase specific for uracil (U) residues in DNA with a preference for single-stranded DNA substrates. The activity is greater toward mismatches (U/G) compared to matches (U/A). Excises uracil (U), 5-formyluracil (fU) and uracil derivatives bearing an oxidized group at C5 [5-hydroxyuracil (hoU) and 5-hydroxymethyluracil (hmU)] in ssDNA and dsDNA, but not analogous cytosine derivatives (5-hydroxycytosine and 5-formylcytosine), nor other oxidized bases. The activity is damage-specific and salt-dependent. The substrate preference is the following: ssDNA &gt; dsDNA (G pair) = dsDNA (A pair) at low salt concentration, and dsDNA (G pair) &gt; dsDNA (A pair) &gt; ssDNA at high salt concentration. This Mus musculus (Mouse) protein is Single-strand selective monofunctional uracil DNA glycosylase (Smug1).